The primary structure comprises 475 residues: 7-dehydrocholesterol reductase (475 aa).

The interval 1–21 (MAAKSQPSAPKTKSTSGLTNG) is disordered. At serine 14 the chain carries Phosphoserine. 6 helical membrane-spanning segments follow: residues 40–60 (LASV…FIMA), 151–173 (WLLT…PTII), 178–200 (IPLL…VKGY), 266–286 (VTNS…DFFW), 306–326 (LGWG…LYLV), and 331–351 (QLPT…YYIF). NADP(+)-binding positions include lysine 358, arginine 362, leucine 395, tryptophan 400, and 407-408 (NY). Residues 420-440 (LACGGGHLLPYFYIIFMAILL) form a helical membrane-spanning segment. NADP(+)-binding positions include aspartate 447, 451–455 (CANKY), and tyrosine 462.

This sequence belongs to the ERG4/ERG24 family. Interacts with DHCR24; this interaction regulates DHCR7 activity. Interacts with TMEM147.

It is found in the endoplasmic reticulum membrane. The enzyme catalyses cholesterol + NADP(+) = 7-dehydrocholesterol + NADPH + H(+). The catalysed reaction is 7-dehydrodesmosterol + NADPH + H(+) = desmosterol + NADP(+). It catalyses the reaction 5,6alpha-epoxy-5alpha-cholestan-3beta-ol + H2O = 5alpha-cholestane-3beta,5,6beta-triol. It carries out the reaction 5,6beta-epoxy-5beta-cholestan-3beta-ol + H2O = 5alpha-cholestane-3beta,5,6beta-triol. It participates in steroid biosynthesis; cholesterol biosynthesis. Its function is as follows. Oxidoreductase that catalyzes the last step of the cholesterol synthesis pathway, which transforms cholesta-5,7-dien-3beta-ol (7-dehydrocholesterol,7-DHC) into cholesterol by reducing the C7-C8 double bond of its sterol core. Can also metabolize cholesta-5,7,24-trien-3beta-ol (7-dehydrodemosterol, 7-DHD) to desmosterol, which is then metabolized by the Delta(24)-sterol reductase (DHCR24) to cholesterol. Modulates ferroptosis (a form of regulated cell death driven by iron-dependent lipid peroxidation) through the metabolic breakdown of the anti-ferroptotic metabolites 7-DHC and 7-DHD which, when accumulated, divert the propagation of peroxyl radical-mediated damage from phospholipid components to its sterol core, protecting plasma and mitochondrial membranes from phospholipid autoxidation. Functionally, component of the microsomal antiestrogen binding site (AEBS), a multiproteic complex at the ER membrane that consists of an association between cholestenol Delta-isomerase/EBP and DHCR7. This complex is responsible for cholesterol-5,6-epoxide hydrolase (ChEH) activity, which consists in the hydration of cholesterol-5,6-epoxides (5,6-EC) into cholestane-3beta,5alpha,6beta-triol (CT). The precise role of each component of this complex has not been described yet. The chain is 7-dehydrocholesterol reductase (DHCR7) from Bos taurus (Bovine).